Here is a 258-residue protein sequence, read N- to C-terminus: Ubiquinone/menaquinone biosynthesis C-methyltransferase UbiE (258 aa).

Residues Thr81, Asp102, and 130–131 (NA) each bind S-adenosyl-L-methionine.

Belongs to the class I-like SAM-binding methyltransferase superfamily. MenG/UbiE family.

It catalyses the reaction a 2-demethylmenaquinol + S-adenosyl-L-methionine = a menaquinol + S-adenosyl-L-homocysteine + H(+). It carries out the reaction a 2-methoxy-6-(all-trans-polyprenyl)benzene-1,4-diol + S-adenosyl-L-methionine = a 5-methoxy-2-methyl-3-(all-trans-polyprenyl)benzene-1,4-diol + S-adenosyl-L-homocysteine + H(+). The protein operates within quinol/quinone metabolism; menaquinone biosynthesis; menaquinol from 1,4-dihydroxy-2-naphthoate: step 2/2. It participates in cofactor biosynthesis; ubiquinone biosynthesis. Functionally, methyltransferase required for the conversion of demethylmenaquinol (DMKH2) to menaquinol (MKH2) and the conversion of 2-polyprenyl-6-methoxy-1,4-benzoquinol (DDMQH2) to 2-polyprenyl-3-methyl-6-methoxy-1,4-benzoquinol (DMQH2). The polypeptide is Ubiquinone/menaquinone biosynthesis C-methyltransferase UbiE (Rhizobium rhizogenes (strain K84 / ATCC BAA-868) (Agrobacterium radiobacter)).